The following is a 141-amino-acid chain: Hemoglobin subunit alpha (141 aa).

The Globin domain maps to valine 1 to arginine 141. At serine 3 the chain carries Phosphoserine. N6-succinyllysine is present on lysine 7. Lysine 16 carries the N6-acetyllysine; alternate modification. Lysine 16 carries the post-translational modification N6-succinyllysine; alternate. Phosphotyrosine is present on tyrosine 24. Serine 35 carries the phosphoserine modification. Lysine 40 is modified (N6-succinyllysine). The residue at position 49 (serine 49) is a Phosphoserine. O2 is bound at residue histidine 58. Histidine 87 is a binding site for heme b. Serine 102 is modified (phosphoserine). Threonine 108 is modified (phosphothreonine). Phosphoserine is present on residues serine 124 and serine 131. Residues threonine 134 and threonine 137 each carry the phosphothreonine modification. The residue at position 138 (serine 138) is a Phosphoserine.

It belongs to the globin family. As to quaternary structure, heterotetramer of two alpha chains and two beta chains. As to expression, red blood cells.

Its function is as follows. Involved in oxygen transport from the lung to the various peripheral tissues. In terms of biological role, hemopressin acts as an antagonist peptide of the cannabinoid receptor CNR1. Hemopressin-binding efficiently blocks cannabinoid receptor CNR1 and subsequent signaling. This Spalax ehrenbergi (Middle East blind mole rat) protein is Hemoglobin subunit alpha (HBA).